The primary structure comprises 2258 residues: Probable serine/threonine-protein kinase ifkA (2258 aa).

Disordered regions lie at residues 43-108 (RVNS…HQMG) and 189-308 (EMNN…KEND). The span at 45–57 (NSSDDINNNNNNN) shows a compositional bias: low complexity. Residues 58–100 (NDDDDDNDDYDDSDDENSDSDYDDYDDSDDENSDDEFYSDDED) are compositionally biased toward acidic residues. Low complexity predominate over residues 191–301 (NNLTNSNNSN…NKELIDNNNN (111 aa)). A coiled-coil region spans residues 273–309 (NNNNNISNNKINKINNNNNNKELIDNNNNNKDKENDL). Residues 319-691 (WKKGSCIERK…AGILLKHPFL (373 aa)) enclose the Protein kinase 1 domain. ATP contacts are provided by residues 325–333 (IERKSNYSV) and K348. The interval 358 to 398 (SSSSLTSLSNSNNNNSNNNNNNNNNNNNNNNNNNNNNNNNN) is disordered. The span at 359–398 (SSSLTSLSNSNNNNSNNNNNNNNNNNNNNNNNNNNNNNNN) shows a compositional bias: low complexity. Catalysis depends on D498, which acts as the Proton acceptor. 2 disordered regions span residues 741 to 768 (KSQT…NGSN) and 782 to 870 (PLAT…MTPL). A compositionally biased stretch (low complexity) spans 746–768 (NNNNDNNNLASSNELLSSSNGSN). Polar residues predominate over residues 782–791 (PLATSSSLDN). A compositionally biased stretch (pro residues) spans 793–805 (TPPPSRPISPKPS). A compositionally biased stretch (low complexity) spans 841 to 870 (PQQNFNTPPTTTTTTTTPTATPTTPTMTPL). Positions 894 to 1482 (FEEIEMIGKG…TKQLLESGLL (589 aa)) constitute a Protein kinase 2 domain. ATP is bound by residues 900–908 (IGKGGFGVV) and K923. Over residues 1053–1094 (TLSSSNTSSSSSLLSNNKSKILNTSKSTSTNTSTSTSTSNTN) the composition is skewed to low complexity. The tract at residues 1053–1259 (TLSSSNTSSS…SSSRKKPPKE (207 aa)) is disordered. Residues 1095 to 1106 (KNKKISKKKKSK) are compositionally biased toward basic residues. The segment covering 1156 to 1185 (NNNNNNDNNNNYHSDNESDSFSGSISMSDG) has biased composition (low complexity). Residues 1206–1233 (DENENDDDDEEDDDDEYDEEDDDYETFD) show a composition bias toward acidic residues. The segment covering 1242-1251 (SNNSKLSTSS) has biased composition (low complexity). D1313 (proton acceptor) is an active-site residue. Disordered stretches follow at residues 1343-1370 (KSDD…TAQQ) and 2048-2104 (GSGG…QQTS). Over residues 1347 to 1368 (LNSSTSNTANNINLSSSTNSTA) the composition is skewed to low complexity. A compositionally biased stretch (gly residues) spans 2048 to 2072 (GSGGSGGSGGGSSMSSGGGGGGNSN). Residues 2085 to 2099 (SNQSTSSSGNSNNSN) show a composition bias toward low complexity.

Belongs to the protein kinase superfamily. Ser/Thr protein kinase family.

The catalysed reaction is L-seryl-[protein] + ATP = O-phospho-L-seryl-[protein] + ADP + H(+). The enzyme catalyses L-threonyl-[protein] + ATP = O-phospho-L-threonyl-[protein] + ADP + H(+). Functionally, phosphorylates eIF2-alpha, from 1 to 7 hours after the onset of development or during the preaggregation state, resulting in a shift from polysomes to free ribosomes for bulk mRNA. The polypeptide is Probable serine/threonine-protein kinase ifkA (ifkA) (Dictyostelium discoideum (Social amoeba)).